The primary structure comprises 227 residues: Superoxide dismutase [Cu-Zn] (227 aa).

Positions 1–19 are cleaved as a signal peptide; the sequence is MPKLLPPVVLAGCVVALGA. C20 carries the N-palmitoyl cysteine lipid modification. Residue C20 is the site of S-diacylglycerol cysteine attachment. The tract at residues 23–55 is disordered; the sequence is PQHASSLPGTTPAVWTGSPSPSGAGAAEAAPAA. Low complexity predominate over residues 39–55; the sequence is GSPSPSGAGAAEAAPAA. Cu cation-binding residues include H103 and H105. A disulfide bridge links C110 with C221. Residue D145 participates in Zn(2+) binding. A Cu cation-binding site is contributed by H182.

It belongs to the Cu-Zn superoxide dismutase family. Cu cation is required as a cofactor. It depends on Zn(2+) as a cofactor.

It is found in the cell membrane. It catalyses the reaction 2 superoxide + 2 H(+) = H2O2 + O2. Destroys radicals which are normally produced within the cells and which are toxic to biological systems. May play a role in favoring mycobacterial survival in phagocytes. This is Superoxide dismutase [Cu-Zn] (sodC) from Mycolicibacterium paratuberculosis (strain ATCC BAA-968 / K-10) (Mycobacterium paratuberculosis).